The sequence spans 305 residues: Aspartate carbamoyltransferase catalytic subunit (305 aa).

Carbamoyl phosphate is bound by residues Arg-54 and Thr-55. Lys-82 is a binding site for L-aspartate. Residues Arg-104, His-132, and Gln-135 each contribute to the carbamoyl phosphate site. 2 residues coordinate L-aspartate: Arg-165 and Arg-218. Positions 259 and 260 each coordinate carbamoyl phosphate.

Belongs to the aspartate/ornithine carbamoyltransferase superfamily. ATCase family. As to quaternary structure, heterododecamer (2C3:3R2) of six catalytic PyrB chains organized as two trimers (C3), and six regulatory PyrI chains organized as three dimers (R2).

The catalysed reaction is carbamoyl phosphate + L-aspartate = N-carbamoyl-L-aspartate + phosphate + H(+). The protein operates within pyrimidine metabolism; UMP biosynthesis via de novo pathway; (S)-dihydroorotate from bicarbonate: step 2/3. In terms of biological role, catalyzes the condensation of carbamoyl phosphate and aspartate to form carbamoyl aspartate and inorganic phosphate, the committed step in the de novo pyrimidine nucleotide biosynthesis pathway. The sequence is that of Aspartate carbamoyltransferase catalytic subunit from Caldicellulosiruptor bescii (strain ATCC BAA-1888 / DSM 6725 / KCTC 15123 / Z-1320) (Anaerocellum thermophilum).